We begin with the raw amino-acid sequence, 238 residues long: 1-(5-phosphoribosyl)-5-[(5-phosphoribosylamino)methylideneamino] imidazole-4-carboxamide isomerase (238 aa).

The Proton acceptor role is filled by Asp8. The Proton donor role is filled by Asp129.

Belongs to the HisA/HisF family.

The protein localises to the cytoplasm. It carries out the reaction 1-(5-phospho-beta-D-ribosyl)-5-[(5-phospho-beta-D-ribosylamino)methylideneamino]imidazole-4-carboxamide = 5-[(5-phospho-1-deoxy-D-ribulos-1-ylimino)methylamino]-1-(5-phospho-beta-D-ribosyl)imidazole-4-carboxamide. The protein operates within amino-acid biosynthesis; L-histidine biosynthesis; L-histidine from 5-phospho-alpha-D-ribose 1-diphosphate: step 4/9. The protein is 1-(5-phosphoribosyl)-5-[(5-phosphoribosylamino)methylideneamino] imidazole-4-carboxamide isomerase of Jannaschia sp. (strain CCS1).